A 289-amino-acid chain; its full sequence is NAC domain-containing protein 2 (289 aa).

The 152-residue stretch at 7-158 (LPPGFRFHPT…DWVLCRIYNK (152 aa)) folds into the NAC domain.

As to quaternary structure, interacts with KIN10 and KIN11.

It localises to the nucleus. This chain is NAC domain-containing protein 2 (NAC002), found in Arabidopsis thaliana (Mouse-ear cress).